The sequence spans 252 residues: NAD-dependent protein deacetylase (252 aa).

The region spanning 2–243 (DSKRDEKILE…DRVVKELKKI (242 aa)) is the Deacetylase sirtuin-type domain. 8 residues coordinate NAD(+): Ala-28, Thr-32, Phe-39, Arg-40, Gln-109, Ile-111, Asp-112, and His-127. Residue Phe-39 coordinates nicotinamide. Nicotinamide contacts are provided by Ile-111 and Asp-112. His-127 serves as the catalytic Proton acceptor. Positions 135, 138, 148, and 150 each coordinate Zn(2+). 3 residues coordinate NAD(+): Thr-188, Ser-189, and Asn-211.

The protein belongs to the sirtuin family. Class U subfamily. Zn(2+) serves as cofactor.

The protein localises to the cytoplasm. The enzyme catalyses N(6)-acetyl-L-lysyl-[protein] + NAD(+) + H2O = 2''-O-acetyl-ADP-D-ribose + nicotinamide + L-lysyl-[protein]. NAD-dependent protein deacetylase which modulates the activities of several enzymes which are inactive in their acetylated form. This chain is NAD-dependent protein deacetylase, found in Fusobacterium nucleatum subsp. nucleatum (strain ATCC 25586 / DSM 15643 / BCRC 10681 / CIP 101130 / JCM 8532 / KCTC 2640 / LMG 13131 / VPI 4355).